Reading from the N-terminus, the 147-residue chain is Austinoid biosynthesis clusters protein H (147 aa).

The protein belongs to the trt14 isomerase family. Homodimer.

The protein operates within secondary metabolite biosynthesis; terpenoid biosynthesis. Its function is as follows. Part of the gene cluster B that mediates the biosynthesis of the fungal meroterpenoid acetoxydehydroaustin. The first step of the pathway is the synthesis of 3,5-dimethylorsellinic acid by the polyketide synthase ausA. 3,5-dimethylorsellinic acid is then prenylated by the polyprenyl transferase ausN. Further epoxidation by the FAD-dependent monooxygenase ausM and cyclization by the probable terpene cyclase ausL lead to the formation of protoaustinoid A. Protoaustinoid A is then oxidized to spiro-lactone preaustinoid A3 by the combined action of the FAD-binding monooxygenases ausB and ausC, and the dioxygenase ausE. Acid-catalyzed keto-rearrangement and ring contraction of the tetraketide portion of preaustinoid A3 by ausJ lead to the formation of preaustinoid A4. The aldo-keto reductase ausK, with the help of ausH, is involved in the next step by transforming preaustinoid A4 into isoaustinone which is in turn hydroxylated by the P450 monooxygenase ausI to form austinolide. The cytochrome P450 monooxygenase ausG then modifies austinolide to austinol. Austinol is further acetylated to austin by the O-acetyltransferase ausP, which spontaneously changes to dehydroaustin. The cytochrome P450 monooxygenase then converts dehydroaustin is into 7-dehydrodehydroaustin. The hydroxylation catalyzed by ausR permits the second O-acetyltransferase ausQ to add an additional acetyl group to the molecule, leading to the formation of acetoxydehydroaustin. Due to genetic rearrangements of the clusters and the subsequent loss of some enzymes, the end product of the Penicillium brasilianum austinoid biosynthesis clusters is acetoxydehydroaustin. This Penicillium brasilianum protein is Austinoid biosynthesis clusters protein H.